The following is a 554-amino-acid chain: U3 small nucleolar RNA-associated protein 7 (554 aa).

A compositionally biased stretch (basic residues) spans 1–12; that stretch reads MGHKKNGHRRQI. A disordered region spans residues 1–39; it reads MGHKKNGHRRQIKERENQNKFERSTYTNNAKNNHTQTKD. The segment covering 13 to 23 has biased composition (basic and acidic residues); the sequence is KERENQNKFER. Over residues 24–35 the composition is skewed to polar residues; it reads STYTNNAKNNHT. 4 WD repeats span residues 108–149, 230–269, 272–311, and 314–351; these read LKEF…AELF, TKAGPTMAMAQNPWNAVMHLGHSNGTVSLWSPSMPEPLVK, SARGPVNSIAIDRSGYYMATTGADRSMKIWDIRNFKQLHS, and SLPTPGTNVSISDTGLLALSRGPHVTLWKDALKLSGDS. The segment at 475-496 is disordered; the sequence is NKAKTNSDIPDVKPDVKGKNSG.

Interacts with snoRNA U3. Interacts with MPP10. Component of the ribosomal small subunit (SSU) processome composed of at least 40 protein subunits and snoRNA U3.

It is found in the nucleus. It localises to the nucleolus. In terms of biological role, involved in nucleolar processing of pre-18S ribosomal RNA. This chain is U3 small nucleolar RNA-associated protein 7 (UTP7), found in Saccharomyces cerevisiae (strain ATCC 204508 / S288c) (Baker's yeast).